Reading from the N-terminus, the 390-residue chain is DNA polymerase IV (390 aa).

Residues 6–187 form the UmuC domain; the sequence is VMHVDLDAFF…LDIAVMPGIG (182 aa). Mg(2+) is bound by residues aspartate 10 and aspartate 105. The active site involves glutamate 106.

This sequence belongs to the DNA polymerase type-Y family. Monomer. Mg(2+) serves as cofactor.

It localises to the cytoplasm. It carries out the reaction DNA(n) + a 2'-deoxyribonucleoside 5'-triphosphate = DNA(n+1) + diphosphate. Its function is as follows. Poorly processive, error-prone DNA polymerase involved in untargeted mutagenesis. Copies undamaged DNA at stalled replication forks, which arise in vivo from mismatched or misaligned primer ends. These misaligned primers can be extended by PolIV. Exhibits no 3'-5' exonuclease (proofreading) activity. May be involved in translesional synthesis, in conjunction with the beta clamp from PolIII. The polypeptide is DNA polymerase IV (Dehalococcoides mccartyi (strain CBDB1)).